Reading from the N-terminus, the 258-residue chain is Leucyl/phenylalanyl-tRNA--protein transferase (258 aa).

The protein belongs to the L/F-transferase family.

It localises to the cytoplasm. It carries out the reaction N-terminal L-lysyl-[protein] + L-leucyl-tRNA(Leu) = N-terminal L-leucyl-L-lysyl-[protein] + tRNA(Leu) + H(+). The catalysed reaction is N-terminal L-arginyl-[protein] + L-leucyl-tRNA(Leu) = N-terminal L-leucyl-L-arginyl-[protein] + tRNA(Leu) + H(+). The enzyme catalyses L-phenylalanyl-tRNA(Phe) + an N-terminal L-alpha-aminoacyl-[protein] = an N-terminal L-phenylalanyl-L-alpha-aminoacyl-[protein] + tRNA(Phe). Its function is as follows. Functions in the N-end rule pathway of protein degradation where it conjugates Leu, Phe and, less efficiently, Met from aminoacyl-tRNAs to the N-termini of proteins containing an N-terminal arginine or lysine. This chain is Leucyl/phenylalanyl-tRNA--protein transferase, found in Alkalilimnicola ehrlichii (strain ATCC BAA-1101 / DSM 17681 / MLHE-1).